Consider the following 339-residue polypeptide: SVP1-like protein 2 (339 aa).

2 WD repeats span residues 177-217 (AHAN…LVRE) and 222-261 (LDRT…ENKR).

It belongs to the WD repeat PROPPIN family.

The protein localises to the vacuole membrane. It localises to the cytoplasmic vesicle membrane. Its function is as follows. Involved in mitochondrial or peroxisomal functions and amino acid signaling pathways. In Kluyveromyces lactis (strain ATCC 8585 / CBS 2359 / DSM 70799 / NBRC 1267 / NRRL Y-1140 / WM37) (Yeast), this protein is SVP1-like protein 2 (HSV2).